The chain runs to 120 residues: Large ribosomal subunit protein uL18 (120 aa).

Belongs to the universal ribosomal protein uL18 family. As to quaternary structure, part of the 50S ribosomal subunit; part of the 5S rRNA/L5/L18/L25 subcomplex. Contacts the 5S and 23S rRNAs.

Functionally, this is one of the proteins that bind and probably mediate the attachment of the 5S RNA into the large ribosomal subunit, where it forms part of the central protuberance. In Rhodospirillum centenum (strain ATCC 51521 / SW), this protein is Large ribosomal subunit protein uL18.